The primary structure comprises 145 residues: 3-dehydroquinate dehydratase (145 aa).

Tyr22 acts as the Proton acceptor in catalysis. Asn71, His77, and Asp84 together coordinate substrate. Residue His97 is the Proton donor of the active site. Substrate-binding positions include 98-99 (IS) and Arg108.

This sequence belongs to the type-II 3-dehydroquinase family. In terms of assembly, homododecamer.

It carries out the reaction 3-dehydroquinate = 3-dehydroshikimate + H2O. Its pathway is metabolic intermediate biosynthesis; chorismate biosynthesis; chorismate from D-erythrose 4-phosphate and phosphoenolpyruvate: step 3/7. Catalyzes a trans-dehydration via an enolate intermediate. In Exiguobacterium sp. (strain ATCC BAA-1283 / AT1b), this protein is 3-dehydroquinate dehydratase.